The sequence spans 1014 residues: Exportin-T (1014 aa).

This sequence belongs to the exportin family.

It localises to the nucleus. It is found in the cytoplasm. TRNA nucleus export receptor which facilitates tRNA translocation across the nuclear pore complex. Involved in pre-tRNA splicing, probably by affecting the interaction of pre-tRNA with splicing endonuclease. This chain is Exportin-T (LOS1), found in Podospora anserina (strain S / ATCC MYA-4624 / DSM 980 / FGSC 10383) (Pleurage anserina).